Reading from the N-terminus, the 412-residue chain is UPF0761 membrane protein lpg0643 (412 aa).

The next 6 helical transmembrane spans lie at 36-56 (ALAFTSLLAVVPLMSVGLAIF), 99-119 (LSIWGIVFLIFTALLVMFTIE), 137-157 (AFLLYWAIISLAPVLLGLSLA), 177-197 (ILHYSPFFLSLIGFTFLYVVV), 210-230 (GGLVAAILFESAKHAFAYYLI), and 241-261 (AFATVPIFFIWVYWVWIITLL).

It belongs to the UPF0761 family.

The protein localises to the cell inner membrane. The protein is UPF0761 membrane protein lpg0643 of Legionella pneumophila subsp. pneumophila (strain Philadelphia 1 / ATCC 33152 / DSM 7513).